The sequence spans 255 residues: tRNA (guanine-N(1)-)-methyltransferase (255 aa).

S-adenosyl-L-methionine-binding positions include glycine 113 and 133–138 (IGDYVL).

This sequence belongs to the RNA methyltransferase TrmD family. As to quaternary structure, homodimer.

It localises to the cytoplasm. The enzyme catalyses guanosine(37) in tRNA + S-adenosyl-L-methionine = N(1)-methylguanosine(37) in tRNA + S-adenosyl-L-homocysteine + H(+). Functionally, specifically methylates guanosine-37 in various tRNAs. This is tRNA (guanine-N(1)-)-methyltransferase from Klebsiella pneumoniae subsp. pneumoniae (strain ATCC 700721 / MGH 78578).